The sequence spans 301 residues: Porphobilinogen deaminase (301 aa).

Cysteine 240 carries the post-translational modification S-(dipyrrolylmethanemethyl)cysteine.

This sequence belongs to the HMBS family. Monomer. It depends on dipyrromethane as a cofactor.

It carries out the reaction 4 porphobilinogen + H2O = hydroxymethylbilane + 4 NH4(+). It participates in porphyrin-containing compound metabolism; protoporphyrin-IX biosynthesis; coproporphyrinogen-III from 5-aminolevulinate: step 2/4. Tetrapolymerization of the monopyrrole PBG into the hydroxymethylbilane pre-uroporphyrinogen in several discrete steps. The protein is Porphobilinogen deaminase of Clostridioides difficile (strain 630) (Peptoclostridium difficile).